The following is a 172-amino-acid chain: Large ribosomal subunit protein uL10 (172 aa).

The protein belongs to the universal ribosomal protein uL10 family. Part of the ribosomal stalk of the 50S ribosomal subunit. The N-terminus interacts with L11 and the large rRNA to form the base of the stalk. The C-terminus forms an elongated spine to which L12 dimers bind in a sequential fashion forming a multimeric L10(L12)X complex.

Functionally, forms part of the ribosomal stalk, playing a central role in the interaction of the ribosome with GTP-bound translation factors. This Bradyrhizobium sp. (strain ORS 278) protein is Large ribosomal subunit protein uL10.